A 399-amino-acid polypeptide reads, in one-letter code: Lovastatin esterase (399 aa).

Ser-57 (nucleophile) is an active-site residue. Residues Lys-60 and Tyr-170 each act as proton acceptor in the active site.

It belongs to the class-A beta-lactamase family.

It catalyses the reaction lovastatin + H2O = monacolin J + (S)-2-methylbutanoate + H(+). The enzyme catalyses pravastatin lactone + H2O = pravastatin diol lactone + (S)-2-methylbutanoate + H(+). It carries out the reaction mevastatin + H2O = compactin diol lactone + (S)-2-methylbutanoate + H(+). In terms of biological role, esterase that can hydrolyze the side chain of lovastatin to produce monacolin J. Is also able to hydrolyze the side chains of mevastatin and pravastatin, but not simvastatin. This Penicillium rubens (strain ATCC 28089 / DSM 1075 / NRRL 1951 / Wisconsin 54-1255) (Penicillium chrysogenum) protein is Lovastatin esterase.